The chain runs to 228 residues: Phosphoenolpyruvate guanylyltransferase (228 aa).

Thr-148, Gly-164, and Ser-167 together coordinate phosphoenolpyruvate.

It belongs to the CofC family.

The enzyme catalyses phosphoenolpyruvate + GTP + H(+) = enolpyruvoyl-2-diphospho-5'-guanosine + diphosphate. It participates in cofactor biosynthesis; coenzyme F420 biosynthesis. Its function is as follows. Guanylyltransferase that catalyzes the activation of phosphoenolpyruvate (PEP) as enolpyruvoyl-2-diphospho-5'-guanosine, via the condensation of PEP with GTP. It is involved in the biosynthesis of coenzyme F420, a hydride carrier cofactor. In Thermomonospora curvata (strain ATCC 19995 / DSM 43183 / JCM 3096 / KCTC 9072 / NBRC 15933 / NCIMB 10081 / Henssen B9), this protein is Phosphoenolpyruvate guanylyltransferase.